The following is a 147-amino-acid chain: Mitochondrial import receptor subunit TOM20 homolog (147 aa).

Topologically, residues Met1–Ala3 are mitochondrial intermembrane. The helical transmembrane segment at Val4 to Phe26 threads the bilayer. Topologically, residues Asp27–Glu147 are cytoplasmic.

It belongs to the Tom20 family. As to quaternary structure, forms part of the preprotein translocase complex of the outer mitochondrial membrane (TOM complex). Interacts with tom22.

It is found in the mitochondrion outer membrane. Its function is as follows. Central component of the receptor complex responsible for the recognition and translocation of cytosolically synthesized mitochondrial preproteins. Together with tom22 functions as the transit peptide receptor at the surface of the mitochondrion outer membrane and facilitates the movement of preproteins into the tom40 translocation pore. This Xenopus laevis (African clawed frog) protein is Mitochondrial import receptor subunit TOM20 homolog (tomm20).